A 434-amino-acid chain; its full sequence is Gamma-glutamyl phosphate reductase (434 aa).

Belongs to the gamma-glutamyl phosphate reductase family.

It is found in the cytoplasm. It catalyses the reaction L-glutamate 5-semialdehyde + phosphate + NADP(+) = L-glutamyl 5-phosphate + NADPH + H(+). It functions in the pathway amino-acid biosynthesis; L-proline biosynthesis; L-glutamate 5-semialdehyde from L-glutamate: step 2/2. Its function is as follows. Catalyzes the NADPH-dependent reduction of L-glutamate 5-phosphate into L-glutamate 5-semialdehyde and phosphate. The product spontaneously undergoes cyclization to form 1-pyrroline-5-carboxylate. The polypeptide is Gamma-glutamyl phosphate reductase (Rhodopirellula baltica (strain DSM 10527 / NCIMB 13988 / SH1)).